A 70-amino-acid chain; its full sequence is UPF0270 protein VV1_1320 (70 aa).

Belongs to the UPF0270 family.

This is UPF0270 protein VV1_1320 from Vibrio vulnificus (strain CMCP6).